The primary structure comprises 107 residues: MAKIIFIEHNGTRHEVEAKPGLTVMEAARDNGVPGIDADCGGACACSTCHAYVDPAWVDKLPKALPTETDMIDFAYEPNPATSRLTCQIKVTSLLDGLVVHLPEKQI.

The 2Fe-2S ferredoxin-type domain occupies 2–106 (AKIIFIEHNG…GLVVHLPEKQ (105 aa)). 4 residues coordinate [2Fe-2S] cluster: Cys40, Cys46, Cys49, and Cys87.

This sequence belongs to the adrenodoxin/putidaredoxin family. The cofactor is [2Fe-2S] cluster.

In terms of biological role, ferredoxins are small electron carrier proteins that participate in various redox reactions. FdVI is an essential protein required for growth of R.capsulatus. May be involved in Fe-S cluster assembly. The polypeptide is Ferredoxin-6 (Rhodobacter capsulatus (Rhodopseudomonas capsulata)).